The chain runs to 89 residues: Small ribosomal subunit protein uS15 (89 aa).

Residues 1-20 are compositionally biased toward basic and acidic residues; sequence MSITQERKSALIAEHARGKT. The interval 1–24 is disordered; that stretch reads MSITQERKSALIAEHARGKTDTGS.

It belongs to the universal ribosomal protein uS15 family. In terms of assembly, part of the 30S ribosomal subunit. Forms a bridge to the 50S subunit in the 70S ribosome, contacting the 23S rRNA.

Functionally, one of the primary rRNA binding proteins, it binds directly to 16S rRNA where it helps nucleate assembly of the platform of the 30S subunit by binding and bridging several RNA helices of the 16S rRNA. Its function is as follows. Forms an intersubunit bridge (bridge B4) with the 23S rRNA of the 50S subunit in the ribosome. This is Small ribosomal subunit protein uS15 from Maricaulis maris (strain MCS10) (Caulobacter maris).